The sequence spans 736 residues: Phosphoribosylformylglycinamidine synthase subunit PurL (736 aa).

Histidine 48 is a catalytic residue. Positions 51 and 90 each coordinate ATP. Glutamate 92 provides a ligand contact to Mg(2+). Residues serine 93–histidine 96 and arginine 115 each bind substrate. Histidine 94 (proton acceptor) is an active-site residue. Aspartate 116 is a binding site for Mg(2+). Residue glutamine 239 participates in substrate binding. Aspartate 267 lines the Mg(2+) pocket. Residue glutamate 311–glutamine 313 coordinates substrate. ATP contacts are provided by aspartate 492 and glycine 529. Residue asparagine 530 coordinates Mg(2+). Residue serine 532 participates in substrate binding.

Belongs to the FGAMS family. Monomer. Part of the FGAM synthase complex composed of 1 PurL, 1 PurQ and 2 PurS subunits.

Its subcellular location is the cytoplasm. The catalysed reaction is N(2)-formyl-N(1)-(5-phospho-beta-D-ribosyl)glycinamide + L-glutamine + ATP + H2O = 2-formamido-N(1)-(5-O-phospho-beta-D-ribosyl)acetamidine + L-glutamate + ADP + phosphate + H(+). The protein operates within purine metabolism; IMP biosynthesis via de novo pathway; 5-amino-1-(5-phospho-D-ribosyl)imidazole from N(2)-formyl-N(1)-(5-phospho-D-ribosyl)glycinamide: step 1/2. Functionally, part of the phosphoribosylformylglycinamidine synthase complex involved in the purines biosynthetic pathway. Catalyzes the ATP-dependent conversion of formylglycinamide ribonucleotide (FGAR) and glutamine to yield formylglycinamidine ribonucleotide (FGAM) and glutamate. The FGAM synthase complex is composed of three subunits. PurQ produces an ammonia molecule by converting glutamine to glutamate. PurL transfers the ammonia molecule to FGAR to form FGAM in an ATP-dependent manner. PurS interacts with PurQ and PurL and is thought to assist in the transfer of the ammonia molecule from PurQ to PurL. The polypeptide is Phosphoribosylformylglycinamidine synthase subunit PurL (Beijerinckia indica subsp. indica (strain ATCC 9039 / DSM 1715 / NCIMB 8712)).